Consider the following 554-residue polypeptide: uncharacterized protein (554 aa).

The next 5 helical transmembrane spans lie at 13 to 31 (SVAHIVFLYAFVVAAGVYL), 36 to 58 (IFGVSLGVTFVLFAGILMGHFGF), 73 to 92 (LILFVFCIGLQVGPSFFSSF), 99 to 121 (LNLLAVGIVVLNIAVALGLYYLW), and 161 to 183 (IALGYACAYPLGVVGIIGSIIAI). RCK C-terminal domains are found at residues 199 to 281 (KTQS…FIGK) and 282 to 366 (EVEL…VLGN). The next 4 membrane-spanning stretches (helical) occupy residues 376–395 (IVTIFVGIFLGILLGSLPIA), 405–422 (LGLAGGPLVVAILIGRFG), 442–464 (IGIVLFLASVGIDAGANFVQTVV), and 468–490 (GLLYVGCGFLITVIPLLIIGAIA).

The protein belongs to the AAE transporter (TC 2.A.81) family.

Its subcellular location is the cell membrane. This is an uncharacterized protein from Bacteroides thetaiotaomicron (strain ATCC 29148 / DSM 2079 / JCM 5827 / CCUG 10774 / NCTC 10582 / VPI-5482 / E50).